The sequence spans 356 residues: UDP-N-acetylglucosamine--N-acetylmuramyl-(pentapeptide) pyrophosphoryl-undecaprenol N-acetylglucosamine transferase (356 aa).

UDP-N-acetyl-alpha-D-glucosamine-binding positions include 10–12 (TAG), asparagine 123, arginine 159, serine 193, isoleucine 240, and glutamine 284.

This sequence belongs to the glycosyltransferase 28 family. MurG subfamily.

Its subcellular location is the cell membrane. It carries out the reaction di-trans,octa-cis-undecaprenyl diphospho-N-acetyl-alpha-D-muramoyl-L-alanyl-D-glutamyl-meso-2,6-diaminopimeloyl-D-alanyl-D-alanine + UDP-N-acetyl-alpha-D-glucosamine = di-trans,octa-cis-undecaprenyl diphospho-[N-acetyl-alpha-D-glucosaminyl-(1-&gt;4)]-N-acetyl-alpha-D-muramoyl-L-alanyl-D-glutamyl-meso-2,6-diaminopimeloyl-D-alanyl-D-alanine + UDP + H(+). The protein operates within cell wall biogenesis; peptidoglycan biosynthesis. In terms of biological role, cell wall formation. Catalyzes the transfer of a GlcNAc subunit on undecaprenyl-pyrophosphoryl-MurNAc-pentapeptide (lipid intermediate I) to form undecaprenyl-pyrophosphoryl-MurNAc-(pentapeptide)GlcNAc (lipid intermediate II). The protein is UDP-N-acetylglucosamine--N-acetylmuramyl-(pentapeptide) pyrophosphoryl-undecaprenol N-acetylglucosamine transferase of Corynebacterium glutamicum (strain ATCC 13032 / DSM 20300 / JCM 1318 / BCRC 11384 / CCUG 27702 / LMG 3730 / NBRC 12168 / NCIMB 10025 / NRRL B-2784 / 534).